The following is a 183-amino-acid chain: ADP-ribosylation factor-like protein 1 (183 aa).

A lipid anchor (N-myristoyl glycine) is attached at Gly2. Residues 25–32 (GLDGAGKT), 68–72 (DLGGQ), and 127–130 (NKQD) contribute to the GTP site.

Belongs to the small GTPase superfamily. Arf family. In terms of assembly, homodimer. Interacts with IMH1 (via GRIP domain); the interaction is dependent on GTP. Interacts with MON2.

The protein resides in the golgi apparatus. Functionally, recruits golgins such as IMH1 to the Golgi. Can bind and hydrolyze GTP. May be involved in trafficking events within the endosomal system. The polypeptide is ADP-ribosylation factor-like protein 1 (ARL1) (Saccharomyces cerevisiae (strain ATCC 204508 / S288c) (Baker's yeast)).